Consider the following 123-residue polypeptide: Small ribosomal subunit protein bS16 (123 aa).

Residues 87 to 123 are disordered; that stretch reads AKNNPIKAKPGKRAQERAAEKAQKAADAAAAAADAAE. The segment covering 99 to 110 has biased composition (basic and acidic residues); the sequence is RAQERAAEKAQK. Residues 111–123 show a composition bias toward low complexity; that stretch reads AADAAAAAADAAE.

Belongs to the bacterial ribosomal protein bS16 family.

This chain is Small ribosomal subunit protein bS16, found in Rhizobium etli (strain CIAT 652).